Consider the following 113-residue polypeptide: Nucleoid-associated protein Syncc9605_0027 (113 aa).

It belongs to the YbaB/EbfC family. Homodimer.

Its subcellular location is the cytoplasm. The protein localises to the nucleoid. Functionally, binds to DNA and alters its conformation. May be involved in regulation of gene expression, nucleoid organization and DNA protection. The sequence is that of Nucleoid-associated protein Syncc9605_0027 from Synechococcus sp. (strain CC9605).